The chain runs to 290 residues: Ribosomal RNA small subunit methyltransferase A (290 aa).

Positions 27, 29, 54, 75, 100, and 125 each coordinate S-adenosyl-L-methionine.

This sequence belongs to the class I-like SAM-binding methyltransferase superfamily. rRNA adenine N(6)-methyltransferase family. RsmA subfamily.

The protein resides in the cytoplasm. The enzyme catalyses adenosine(1518)/adenosine(1519) in 16S rRNA + 4 S-adenosyl-L-methionine = N(6)-dimethyladenosine(1518)/N(6)-dimethyladenosine(1519) in 16S rRNA + 4 S-adenosyl-L-homocysteine + 4 H(+). Specifically dimethylates two adjacent adenosines (A1518 and A1519) in the loop of a conserved hairpin near the 3'-end of 16S rRNA in the 30S particle. May play a critical role in biogenesis of 30S subunits. The chain is Ribosomal RNA small subunit methyltransferase A from Streptococcus agalactiae serotype V (strain ATCC BAA-611 / 2603 V/R).